The chain runs to 3147 residues: Probable polyketide synthase 1 (3147 aa).

In terms of domain architecture, Ketosynthase family 3 (KS3) spans 12 to 457 (SSDVAVIGVG…GSNCHLIIQE (446 aa)). Residues Cys-180 and His-319 each act as for beta-ketoacyl synthase activity in the active site. The disordered stretch occupies residues 345–369 (QLNNFSTDGNDNDDDDDDNTSPEPL). A compositionally biased stretch (acidic residues) spans 354–364 (NDNDDDDDDNT). Residue His-380 is the For beta-ketoacyl synthase activity of the active site. Residues 672 to 705 (GIYPSISVGHSFGEVSSYYLSGIISLETACKIVY) form an acyl/malonyl transferase region. Residue Ser-682 is the For acyl/malonyl transferase activity of the active site. An N-terminal hotdog fold region spans residues 976–1127 (NRLEGPTTSL…ATISLEQQQP (152 aa)). The region spanning 976-1298 (NRLEGPTTSL…IKSTNPKSTK (323 aa)) is the PKS/mFAS DH domain. His-1014 serves as the catalytic Proton acceptor; for dehydratase activity. The interval 1149–1298 (DISKLDKFEL…IKSTNPKSTK (150 aa)) is C-terminal hotdog fold. Asp-1209 acts as the Proton donor; for dehydratase activity in catalysis. A Carrier domain is found at 2568–2645 (SSNISLQDKI…SFLEKVNGLS (78 aa)). An O-(pantetheine 4'-phosphoryl)serine modification is found at Ser-2605. The tract at residues 2723–2747 (PSLSQSDVLKTPPIKSLNNTKNSSL) is disordered. Positions 2738 to 2747 (SLNNTKNSSL) are enriched in polar residues. The interval 2789-3147 (VLGIGISVPG…FEGCFLKNVV (359 aa)) is chalcone synthase. Cys-2930 is a catalytic residue.

This sequence in the C-terminal section; belongs to the thiolase-like superfamily. Chalcone/stilbene synthases family. As to quaternary structure, homodimer. Requires pantetheine 4'-phosphate as cofactor.

It catalyses the reaction (E)-4-coumaroyl-CoA + 3 malonyl-CoA + 3 H(+) = 2',4,4',6'-tetrahydroxychalcone + 3 CO2 + 4 CoA. The protein operates within secondary metabolite biosynthesis; flavonoid biosynthesis. In terms of biological role, probable polyketide synthase. Produces only acylpyrones; in vitro. This chain is Probable polyketide synthase 1 (stlA), found in Dictyostelium discoideum (Social amoeba).